The primary structure comprises 247 residues: NAD(P)H-quinone oxidoreductase subunit K (247 aa).

The [4Fe-4S] cluster site is built by cysteine 63, cysteine 64, cysteine 128, and cysteine 159.

The protein belongs to the complex I 20 kDa subunit family. As to quaternary structure, NDH-1 can be composed of about 15 different subunits; different subcomplexes with different compositions have been identified which probably have different functions. Requires [4Fe-4S] cluster as cofactor.

It is found in the cellular thylakoid membrane. The catalysed reaction is a plastoquinone + NADH + (n+1) H(+)(in) = a plastoquinol + NAD(+) + n H(+)(out). It catalyses the reaction a plastoquinone + NADPH + (n+1) H(+)(in) = a plastoquinol + NADP(+) + n H(+)(out). NDH-1 shuttles electrons from an unknown electron donor, via FMN and iron-sulfur (Fe-S) centers, to quinones in the respiratory and/or the photosynthetic chain. The immediate electron acceptor for the enzyme in this species is believed to be plastoquinone. Couples the redox reaction to proton translocation, and thus conserves the redox energy in a proton gradient. Cyanobacterial NDH-1 also plays a role in inorganic carbon-concentration. This is NAD(P)H-quinone oxidoreductase subunit K from Gloeothece citriformis (strain PCC 7424) (Cyanothece sp. (strain PCC 7424)).